The primary structure comprises 37 residues: Cytochrome b6-f complex subunit 5 (37 aa).

Residues 5–25 (FLLGIILGLIPITLIGLFVTA) form a helical membrane-spanning segment.

It belongs to the PetG family. As to quaternary structure, the 4 large subunits of the cytochrome b6-f complex are cytochrome b6, subunit IV (17 kDa polypeptide, PetD), cytochrome f and the Rieske protein, while the 4 small subunits are PetG, PetL, PetM and PetN. The complex functions as a dimer.

Its subcellular location is the plastid membrane. Its function is as follows. Component of the cytochrome b6-f complex, which mediates electron transfer between photosystem II (PSII) and photosystem I (PSI), cyclic electron flow around PSI, and state transitions. PetG is required for either the stability or assembly of the cytochrome b6-f complex. This chain is Cytochrome b6-f complex subunit 5, found in Cuscuta obtusiflora (Peruvian dodder).